Consider the following 130-residue polypeptide: UPF0212 protein TSIB_1358 (130 aa).

Belongs to the UPF0212 family.

The protein is UPF0212 protein TSIB_1358 of Thermococcus sibiricus (strain DSM 12597 / MM 739).